Consider the following 616-residue polypeptide: Proline--tRNA ligase (616 aa).

The protein belongs to the class-II aminoacyl-tRNA synthetase family. ProS type 1 subfamily. In terms of assembly, homodimer.

The protein resides in the cytoplasm. It catalyses the reaction tRNA(Pro) + L-proline + ATP = L-prolyl-tRNA(Pro) + AMP + diphosphate. In terms of biological role, catalyzes the attachment of proline to tRNA(Pro) in a two-step reaction: proline is first activated by ATP to form Pro-AMP and then transferred to the acceptor end of tRNA(Pro). As ProRS can inadvertently accommodate and process non-cognate amino acids such as alanine and cysteine, to avoid such errors it has two additional distinct editing activities against alanine. One activity is designated as 'pretransfer' editing and involves the tRNA(Pro)-independent hydrolysis of activated Ala-AMP. The other activity is designated 'posttransfer' editing and involves deacylation of mischarged Ala-tRNA(Pro). The misacylated Cys-tRNA(Pro) is not edited by ProRS. The chain is Proline--tRNA ligase from Streptococcus sanguinis (strain SK36).